A 343-amino-acid polypeptide reads, in one-letter code: Heat-inducible transcription repressor HrcA (343 aa).

This sequence belongs to the HrcA family.

In terms of biological role, negative regulator of class I heat shock genes (grpE-dnaK-dnaJ and groELS operons). Prevents heat-shock induction of these operons. This is Heat-inducible transcription repressor HrcA from Thermoanaerobacter pseudethanolicus (strain ATCC 33223 / 39E) (Clostridium thermohydrosulfuricum).